Reading from the N-terminus, the 939-residue chain is Translation initiation factor IF-2 (939 aa).

2 disordered regions span residues 51–81 (LGTK…GGKK) and 137–353 (VTNK…EMKA). Positions 181–210 (NEKKAGAPEIKRAEHTETVEKSKTAVDSKK) are enriched in basic and acidic residues. Residues 259–277 (PVNRSPRPSTPSPNRSAGG) are compositionally biased toward low complexity. A compositionally biased stretch (basic and acidic residues) spans 300 to 312 (RRDEKPAERDSRP). The tr-type G domain maps to 437–606 (GRCPVVTVMG…QLAAEMLELK (170 aa)). The tract at residues 446 to 453 (GHVDHGKT) is G1. Residue 446 to 453 (GHVDHGKT) participates in GTP binding. The interval 471–475 (GITQH) is G2. A G3 region spans residues 492–495 (DTPG). GTP is bound by residues 492 to 496 (DTPGH) and 546 to 549 (NKID). Positions 546–549 (NKID) are G4. Positions 582–584 (SAK) are G5.

The protein belongs to the TRAFAC class translation factor GTPase superfamily. Classic translation factor GTPase family. IF-2 subfamily.

The protein localises to the cytoplasm. One of the essential components for the initiation of protein synthesis. Protects formylmethionyl-tRNA from spontaneous hydrolysis and promotes its binding to the 30S ribosomal subunits. Also involved in the hydrolysis of GTP during the formation of the 70S ribosomal complex. This Desulfotalea psychrophila (strain LSv54 / DSM 12343) protein is Translation initiation factor IF-2.